Reading from the N-terminus, the 835-residue chain is Protein translocase subunit SecA (835 aa).

Residues Gln-85, Gly-103–Thr-107, and Asp-492 contribute to the ATP site. Zn(2+) is bound by residues Cys-819, Cys-821, Cys-830, and Cys-831.

Belongs to the SecA family. As to quaternary structure, monomer and homodimer. Part of the essential Sec protein translocation apparatus which comprises SecA, SecYEG and auxiliary proteins SecDF. Other proteins may also be involved. Requires Zn(2+) as cofactor.

It localises to the cell membrane. The protein localises to the cytoplasm. The catalysed reaction is ATP + H2O + cellular proteinSide 1 = ADP + phosphate + cellular proteinSide 2.. Functionally, part of the Sec protein translocase complex. Interacts with the SecYEG preprotein conducting channel. Has a central role in coupling the hydrolysis of ATP to the transfer of proteins into and across the cell membrane, serving as an ATP-driven molecular motor driving the stepwise translocation of polypeptide chains across the membrane. This chain is Protein translocase subunit SecA, found in Clostridium botulinum (strain ATCC 19397 / Type A).